The primary structure comprises 225 residues: Holliday junction branch migration complex subunit RuvA (225 aa).

The interval 1–68 (MIGWLQGQKV…DDGSSLFGFP (68 aa)) is domain I. The tract at residues 69 to 147 (ERRERDMFRT…EFSCRDPGMS (79 aa)) is domain II. A flexible linker region spans residues 148 to 158 (LVDNGVIDSHQ). Residues 159–225 (LKDSSLHELQ…SLRWLSQEAA (67 aa)) form a domain III region.

This sequence belongs to the RuvA family. Homotetramer. Forms an RuvA(8)-RuvB(12)-Holliday junction (HJ) complex. HJ DNA is sandwiched between 2 RuvA tetramers; dsDNA enters through RuvA and exits via RuvB. An RuvB hexamer assembles on each DNA strand where it exits the tetramer. Each RuvB hexamer is contacted by two RuvA subunits (via domain III) on 2 adjacent RuvB subunits; this complex drives branch migration. In the full resolvosome a probable DNA-RuvA(4)-RuvB(12)-RuvC(2) complex forms which resolves the HJ.

Its subcellular location is the cytoplasm. In terms of biological role, the RuvA-RuvB-RuvC complex processes Holliday junction (HJ) DNA during genetic recombination and DNA repair, while the RuvA-RuvB complex plays an important role in the rescue of blocked DNA replication forks via replication fork reversal (RFR). RuvA specifically binds to HJ cruciform DNA, conferring on it an open structure. The RuvB hexamer acts as an ATP-dependent pump, pulling dsDNA into and through the RuvAB complex. HJ branch migration allows RuvC to scan DNA until it finds its consensus sequence, where it cleaves and resolves the cruciform DNA. In Prochlorococcus marinus (strain MIT 9313), this protein is Holliday junction branch migration complex subunit RuvA.